Here is a 126-residue protein sequence, read N- to C-terminus: Holo-[acyl-carrier-protein] synthase (126 aa).

Positions 8 and 50 each coordinate Mg(2+).

The protein belongs to the P-Pant transferase superfamily. AcpS family. Mg(2+) is required as a cofactor.

It is found in the cytoplasm. It carries out the reaction apo-[ACP] + CoA = holo-[ACP] + adenosine 3',5'-bisphosphate + H(+). Transfers the 4'-phosphopantetheine moiety from coenzyme A to a Ser of acyl-carrier-protein. This is Holo-[acyl-carrier-protein] synthase from Micrococcus luteus (strain ATCC 4698 / DSM 20030 / JCM 1464 / CCM 169 / CCUG 5858 / IAM 1056 / NBRC 3333 / NCIMB 9278 / NCTC 2665 / VKM Ac-2230) (Micrococcus lysodeikticus).